Reading from the N-terminus, the 546-residue chain is Tyrosine-protein kinase yes (546 aa).

Residues 1–18 (MGCVKSKEDKGPTQKYRP) show a composition bias toward basic and acidic residues. The interval 1 to 58 (MGCVKSKEDKGPTQKYRPDPTNPTPGSHMGLYGPDPTQMGQSPALKGPTNNYNSRSSG) is disordered. A lipid anchor (N-myristoyl glycine) is attached at G2. C3 carries the S-palmitoyl cysteine; in membrane form lipid modification. Polar residues predominate over residues 48–58 (PTNNYNSRSSG). An SH3 domain is found at 94–155 (GGVTFFVALY…PSNYVAPADS (62 aa)). The region spanning 161–258 (WYFGKMGRKD…GLCYRLTTVC (98 aa)) is the SH2 domain. A Protein kinase domain is found at 280 to 533 (LRLELKLGQG…YIQSFLEDYF (254 aa)). Residues 286-294 (LGQGCFGEV) and K308 each bind ATP. D399 functions as the Proton acceptor in the catalytic mechanism. Residue Y429 is modified to Phosphotyrosine; by autocatalysis. At Y540 the chain carries Phosphotyrosine; by CSK.

The protein belongs to the protein kinase superfamily. Tyr protein kinase family. SRC subfamily. In terms of processing, autophosphorylation at Tyr-429 maintains enzyme activity. Post-translationally, palmitoylation at Cys-3 promotes membrane localization. As to expression, widely expressed.

Its subcellular location is the cell membrane. It localises to the cytoplasm. The protein localises to the cytoskeleton. The protein resides in the microtubule organizing center. It is found in the centrosome. Its subcellular location is the cytosol. It localises to the cell junction. The enzyme catalyses L-tyrosyl-[protein] + ATP = O-phospho-L-tyrosyl-[protein] + ADP + H(+). In terms of biological role, non-receptor protein tyrosine kinase that is involved in the regulation of cell growth and survival, apoptosis, cell-cell adhesion, cytoskeleton remodeling, differentiation, G2/M progression and cytokinesis. Required for convergent extension cell movements during gastrulation, acting with fyna via rhoa. May be required for epiboly to occur, possibly through its effects in calcium signaling. During embryonic development, phosphorylates ptk2.1/fak. The protein is Tyrosine-protein kinase yes (yes1) of Danio rerio (Zebrafish).